The sequence spans 716 residues: Calpain-1 catalytic subunit (716 aa).

In terms of domain architecture, Calpain catalytic spans 55–354; that stretch reads LFRDEAFPPV…FTRLEICNLT (300 aa). Ca(2+) is bound by residues Gln109 and Asp114. Residues Cys115, His272, and Asn296 contribute to the active site. Asp318 and Glu323 together coordinate Ca(2+). Thr354 is modified (phosphothreonine). Positions 355–528 are domain III; sequence PDALKSQRFR…KSAGTQELDD (174 aa). Residues 529–544 are linker; the sequence is QVQANLPDEQVLSEEE. 4 consecutive EF-hand domains span residues 543–578, 587–620, 617–652, and 682–716; these read EEID…IISK, FSLE…NRIR, NRIR…AGFK, and VRLE…TMFA. Positions 545–715 are domain IV; sequence IDENFKSLFR…LFKWLQLTMF (171 aa). Residues Asp600, Asp602, Asn604, Lys606, Glu611, Asp630, Asp632, Ser634, Ser636, and Glu641 each coordinate Ca(2+).

The protein belongs to the peptidase C2 family. In terms of assembly, forms a heterodimer with a small (regulatory) subunit CAPNS1. The cofactor is Ca(2+). In terms of processing, undergoes calcium-induced successive autoproteolytic cleavages that generate a membrane-bound 78 kDa active form and an intracellular 75 kDa active form. Calpastatin reduces with high efficiency the transition from 78 kDa to 75 kDa calpain forms.

Its subcellular location is the cytoplasm. It is found in the cell membrane. The enzyme catalyses Broad endopeptidase specificity.. Activated by micromolar concentrations of calcium and inhibited by calpastatin. Functionally, calcium-regulated non-lysosomal thiol-protease which catalyzes limited proteolysis of substrates involved in cytoskeletal remodeling and signal transduction. Proteolytically cleaves CTBP1. Cleaves and activates caspase-7 (CASP7). This chain is Calpain-1 catalytic subunit, found in Bos taurus (Bovine).